The following is a 118-amino-acid chain: Large ribosomal subunit protein bL20 (118 aa).

The protein belongs to the bacterial ribosomal protein bL20 family.

Functionally, binds directly to 23S ribosomal RNA and is necessary for the in vitro assembly process of the 50S ribosomal subunit. It is not involved in the protein synthesizing functions of that subunit. This Campylobacter concisus (strain 13826) protein is Large ribosomal subunit protein bL20.